The sequence spans 206 residues: Thymidylate kinase (206 aa).

ATP is bound at residue 10 to 17; the sequence is GVDGVGKT.

Belongs to the thymidylate kinase family.

It carries out the reaction dTMP + ATP = dTDP + ADP. In terms of biological role, phosphorylation of dTMP to form dTDP in both de novo and salvage pathways of dTTP synthesis. The protein is Thymidylate kinase of Bifidobacterium longum (strain DJO10A).